A 502-amino-acid chain; its full sequence is Peroxisomal catalase (502 aa).

Active-site residues include H64 and N137. Residue Y347 participates in heme binding. Residues 500–502 (AKM) carry the Microbody targeting signal motif.

The protein belongs to the catalase family. Heme is required as a cofactor.

The protein resides in the peroxisome matrix. It carries out the reaction 2 H2O2 = O2 + 2 H2O. Functionally, catalyzes the degradation of hydrogen peroxide (H(2)O(2)) generated by peroxisomal oxidases to water and oxygen, thereby protecting cells from the toxic effects of hydrogen peroxide. In Toxoplasma gondii, this protein is Peroxisomal catalase.